Reading from the N-terminus, the 430-residue chain is Probable aspartic-type endopeptidase TRV_06366 (430 aa).

Residues 1-17 (MHVSTLLVAVLLPLALS) form the signal peptide. Residues 18 to 87 (KPTPRKKTSS…SKATAGSGKE (70 aa)) constitute a propeptide, activation peptide. Positions 61-104 (HEMEGYHPQPISKLPGNSKATAGSGKEGVESQDEKGEVVNNPTD) are disordered. Residues 87-104 (EGVESQDEKGEVVNNPTD) show a composition bias toward basic and acidic residues. The Peptidase A1 domain occupies 109-427 (FLSPVTIGGQ…DQRGPSISLA (319 aa)). The active site involves Asp125. Asn306 carries N-linked (GlcNAc...) asparagine glycosylation. The active site involves Asp314.

Belongs to the peptidase A1 family.

It is found in the secreted. Probable secreted aspartic-type endopeptidase which contributes to virulence. This Trichophyton verrucosum (strain HKI 0517) protein is Probable aspartic-type endopeptidase TRV_06366.